The following is a 212-amino-acid chain: ATP phosphoribosyltransferase (212 aa).

It belongs to the ATP phosphoribosyltransferase family. Short subfamily. Heteromultimer composed of HisG and HisZ subunits.

The protein resides in the cytoplasm. It carries out the reaction 1-(5-phospho-beta-D-ribosyl)-ATP + diphosphate = 5-phospho-alpha-D-ribose 1-diphosphate + ATP. Its pathway is amino-acid biosynthesis; L-histidine biosynthesis; L-histidine from 5-phospho-alpha-D-ribose 1-diphosphate: step 1/9. Functionally, catalyzes the condensation of ATP and 5-phosphoribose 1-diphosphate to form N'-(5'-phosphoribosyl)-ATP (PR-ATP). Has a crucial role in the pathway because the rate of histidine biosynthesis seems to be controlled primarily by regulation of HisG enzymatic activity. The chain is ATP phosphoribosyltransferase from Clostridium botulinum (strain Langeland / NCTC 10281 / Type F).